A 121-amino-acid polypeptide reads, in one-letter code: uncharacterized protein (121 aa).

The interval 85-111 (NANNDDYESPYKTPKIKSNPSLDSSGS) is disordered. Residues 100-111 (IKSNPSLDSSGS) show a composition bias toward polar residues.

This is an uncharacterized protein from Dictyostelium discoideum (Social amoeba).